The primary structure comprises 642 residues: Rhotekin-2 (642 aa).

In terms of domain architecture, REM-1 spans 30-105 (IKRKKIRESM…AQKRTGHQDF (76 aa)). A PH domain is found at 306-413 (LDMMSGFLSQ…WLDSLWQHIY (108 aa)). Disordered regions lie at residues 505 to 563 (TVLS…GRPS) and 575 to 642 (LQKS…PKAW). 2 stretches are compositionally biased toward basic and acidic residues: residues 597–615 (PEKR…KEYI) and 632–642 (SFREKMNPKAW).

The sequence is that of Rhotekin-2 (rtkn2) from Danio rerio (Zebrafish).